We begin with the raw amino-acid sequence, 64 residues long: Large ribosomal subunit protein eL37 (64 aa).

Zn(2+)-binding residues include C20, C23, C35, and C38. The C4-type zinc finger occupies 20 to 38 (CRRCGRRSFHVRKKVCAAC).

The protein belongs to the eukaryotic ribosomal protein eL37 family. It depends on Zn(2+) as a cofactor.

Its function is as follows. Binds to the 23S rRNA. The chain is Large ribosomal subunit protein eL37 from Methanococcus maripaludis (strain C5 / ATCC BAA-1333).